The following is a 121-amino-acid chain: Basic phospholipase A2 homolog BaTX (121 aa).

7 disulfide bridges follow: C26–C115, C28–C44, C43–C95, C49–C121, C50–C88, C57–C81, and C75–C86. The important for membrane-damaging activities in eukaryotes and bacteria; heparin-binding stretch occupies residues K105–K117.

Belongs to the phospholipase A2 family. Group II subfamily. K49 sub-subfamily. Homodimer; non-covalently linked. As to expression, expressed by the venom gland.

The protein resides in the secreted. Snake venom phospholipase A2 homolog that lacks enzymatic activity. Is myotoxic and displays edema-inducing activities. In vitro, produced time-dependent, irreversible neuromuscular blockade in isolated mouse phrenic nerve-diaphragm and chick biventer cervicis preparations. A model of myotoxic mechanism has been proposed: an apo Lys49-PLA2 is activated by the entrance of a hydrophobic molecule (e.g. fatty acid) at the hydrophobic channel of the protein leading to a reorientation of a monomer. This reorientation causes a transition between 'inactive' to 'active' states, causing alignment of C-terminal and membrane-docking sites (MDoS) side-by-side and putting the membrane-disruption sites (MDiS) in the same plane, exposed to solvent and in a symmetric position for both monomers. The MDoS region stabilizes the toxin on membrane by the interaction of charged residues with phospholipid head groups. Subsequently, the MDiS region destabilizes the membrane with penetration of hydrophobic residues. This insertion causes a disorganization of the membrane, allowing an uncontrolled influx of ions (i.e. calcium and sodium), and eventually triggering irreversible intracellular alterations and cell death. The polypeptide is Basic phospholipase A2 homolog BaTX (Bothrops alternatus (Urutu)).